A 362-amino-acid chain; its full sequence is Phospho-N-acetylmuramoyl-pentapeptide-transferase (362 aa).

The next 10 helical transmembrane spans lie at 28–48, 72–92, 100–120, 134–154, 170–190, 201–221, 241–261, 265–285, 290–310, and 339–359; these read AACM…IRWL, GTPT…TLLW, VWAV…DDYL, VKLI…MSLT, VLIP…MGAS, GLAI…AYLV, LTVF…FNAP, VFMG…VAIA, IVLA…IVQV, and TIVI…LATL.

The protein belongs to the glycosyltransferase 4 family. MraY subfamily. Requires Mg(2+) as cofactor.

Its subcellular location is the cell inner membrane. It catalyses the reaction UDP-N-acetyl-alpha-D-muramoyl-L-alanyl-gamma-D-glutamyl-meso-2,6-diaminopimeloyl-D-alanyl-D-alanine + di-trans,octa-cis-undecaprenyl phosphate = di-trans,octa-cis-undecaprenyl diphospho-N-acetyl-alpha-D-muramoyl-L-alanyl-D-glutamyl-meso-2,6-diaminopimeloyl-D-alanyl-D-alanine + UMP. The protein operates within cell wall biogenesis; peptidoglycan biosynthesis. Functionally, catalyzes the initial step of the lipid cycle reactions in the biosynthesis of the cell wall peptidoglycan: transfers peptidoglycan precursor phospho-MurNAc-pentapeptide from UDP-MurNAc-pentapeptide onto the lipid carrier undecaprenyl phosphate, yielding undecaprenyl-pyrophosphoryl-MurNAc-pentapeptide, known as lipid I. The polypeptide is Phospho-N-acetylmuramoyl-pentapeptide-transferase (Granulibacter bethesdensis (strain ATCC BAA-1260 / CGDNIH1)).